The sequence spans 223 residues: Glutathione S-transferase A1 (223 aa).

Methionine 1 carries the post-translational modification N-acetylmethionine. At alanine 2 the chain carries N-acetylalanine; in Glutathione S-transferase A1, N-terminally processed. The region spanning 3-83 is the GST N-terminal domain; that stretch reads GKPVLHYFNA…YIATKYDLYG (81 aa). An N6-succinyllysine modification is found at lysine 4. Glutathione is bound by residues tyrosine 9, lysine 45, 54-55, and 67-68; these read QV and QT. The GST C-terminal domain occupies 85 to 208; it reads DMKERALIDM…QPGSQRKPPM (124 aa).

This sequence belongs to the GST superfamily. Alpha family. In terms of assembly, homodimer. In terms of tissue distribution, expressed in the liver, skin and kidney.

The enzyme catalyses RX + glutathione = an S-substituted glutathione + a halide anion + H(+). The catalysed reaction is prostaglandin A2 + glutathione = prostaglandin A2-S-(R)-glutathione. It catalyses the reaction prostaglandin J2 + glutathione = prostaglandin J2-S-(R)-glutathione. It carries out the reaction (13S)-hydroperoxy-(9Z,11E)-octadecadienoate + 2 glutathione = (13S)-hydroxy-(9Z,11E)-octadecadienoate + glutathione disulfide + H2O. The enzyme catalyses androst-5-ene-3,17-dione = androst-4-ene-3,17-dione. Its function is as follows. Glutathione S-transferase that catalyzes the nucleophilic attack of the sulfur atom of glutathione on the electrophilic groups of a wide range of exogenous and endogenous compounds. Involved in the formation of glutathione conjugates of both prostaglandin A2 (PGA2) and prostaglandin J2 (PGJ2). It also catalyzes the isomerization of D5-androstene-3,17-dione (AD) into D4-androstene-3,17-dione and may therefore play an important role in hormone biosynthesis. Through its glutathione-dependent peroxidase activity toward the fatty acid hydroperoxide (13S)-hydroperoxy-(9Z,11E)-octadecadienoate/13-HPODE it is also involved in the metabolism of oxidized linoleic acid. The chain is Glutathione S-transferase A1 (Gsta1) from Mus musculus (Mouse).